An 869-amino-acid polypeptide reads, in one-letter code: Probable inorganic carbon transporter subunit DabA (869 aa).

Positions 1-32 are disordered; sequence MSTATLEQRAKRGEAPRANDAGHCAHPADGAR. Over residues 8–17 the composition is skewed to basic and acidic residues; the sequence is QRAKRGEAPR. Zn(2+)-binding residues include Cys376, Asp378, His555, and Cys570.

It belongs to the inorganic carbon transporter (TC 9.A.2) DabA family. In terms of assembly, forms a complex with DabB. Zn(2+) is required as a cofactor.

It localises to the cell inner membrane. Functionally, part of an energy-coupled inorganic carbon pump. This is Probable inorganic carbon transporter subunit DabA from Burkholderia multivorans (strain ATCC 17616 / 249).